A 236-amino-acid chain; its full sequence is Purine nucleoside phosphorylase DeoD-type (236 aa).

Position 5 (His-5) interacts with a purine D-ribonucleoside. Residues Gly-21, Arg-25, Arg-44, and 88 to 91 (RVGS) each bind phosphate. Residues 180–182 (DME) and 204–205 (SD) each bind a purine D-ribonucleoside. Catalysis depends on Asp-205, which acts as the Proton donor.

It belongs to the PNP/UDP phosphorylase family. As to quaternary structure, homohexamer; trimer of homodimers.

It catalyses the reaction a purine D-ribonucleoside + phosphate = a purine nucleobase + alpha-D-ribose 1-phosphate. The catalysed reaction is a purine 2'-deoxy-D-ribonucleoside + phosphate = a purine nucleobase + 2-deoxy-alpha-D-ribose 1-phosphate. Catalyzes the reversible phosphorolytic breakdown of the N-glycosidic bond in the beta-(deoxy)ribonucleoside molecules, with the formation of the corresponding free purine bases and pentose-1-phosphate. The polypeptide is Purine nucleoside phosphorylase DeoD-type (Aliivibrio salmonicida (strain LFI1238) (Vibrio salmonicida (strain LFI1238))).